Here is a 1159-residue protein sequence, read N- to C-terminus: MSIRFIYGRAGSGKTYFCLEEIKHKLNDGANHPLILLVPEQFTFEAEKYLLDMIERDEKMRAQVLSFKTLANRVFVEVGGLARQHMKACGKSMVIYKVLEENKEKLKVYSKASRQQGFVKKISEAITEFKRFDVTPFQLIDASEKIEKLGLKEKLEDLALIYSSFEEVLHKNYIDEEDELDLLSKKLEKSLQFEGAEFWIDGFTGFTPKQYKVIEKLLKKASRVSVTLTLDPSIDSIDPTHLFYTTKKTEEKLIKICETNGISVEEPVNLNKGIPKRFEHNKELAFLEKNFFSHPYEIYNEETKNISIFKATNMYSEVEEVARDIARLIRDEHMRYSDIVVATKDLKRYYKLVKAIFSHYGIPHFIDLKINITNNPIIVYVISIFEIYLKNWSYESVFRYLKTGFTGIDKEEINLLENYVLANGIKGNKWKERWEYRIDYKTDSLLMEEREKQIINKVNEVRERVYLPLEKFYTRFSHSKNVKEACEVLYDFLVENKLPEKIEKFIEEFKNRGEFDTANQYAQIWDIVVDVLDQMVEVLGEEKISLEQFARLISIGFDEYQIASIPPALDEVLVTSVDRMKSHNSKVLYLLGANDGVFPASSFEEGIFSDEERNLLSSLDLELDRDTKAKVFEEQFLVYTALTSASEFLKISYPIADHEGRSLRPSIIISRLRRIFPKIKVSTNIVEMDTDEENLNRVTVPLPTFNEMIKSFKKWNITGKIHPIWLEVYKWYRTKDEWKKKLEDTLEGFVYDNQIKRIPPLKIKKLYGEEMEFSVSRLEKYAACPFAYFVQYGLKAKERKIYGFEPPDLGIFMHNVLNEIAKALEKEELTWQEIDKEWCNDAVDIIVEEMVDKIPGYILKSSSRYRYLANRLKRVLSKAVWIISEHMKRSSFVPLGHEVAFGENQKYPPIKIVLSNGEEIKLIGRIDRVDVLEKEGETYVRIIDYKSGDKTLDLSDVLYGLELQLLVYLDAILESAFEGKANLSPAGIFYFKIDDPIVRADKDISDEELYKEIMKRLRLEGFVLKSLDIIREMDKLIEGTSYVIPASINKDGTIGKNTKGLTEEQFEILRKFVKKKSKKLAEEMLQGDISILPYKKEKETACQYCPYSSICKFETNFKGNDYRRIESKEEKLWSIFEEEVKEDGSQVDGRTEGSDNNEG.

8–15 lines the ATP pocket; the sequence is GRAGSGKT. [4Fe-4S] cluster contacts are provided by Cys-784, Cys-1102, Cys-1105, and Cys-1111. Positions 1140–1159 are disordered; sequence VKEDGSQVDGRTEGSDNNEG.

The protein belongs to the helicase family. AddB/RexB type 1 subfamily. In terms of assembly, heterodimer of AddA and AddB. Requires Mg(2+) as cofactor. [4Fe-4S] cluster is required as a cofactor.

Its function is as follows. The heterodimer acts as both an ATP-dependent DNA helicase and an ATP-dependent, dual-direction single-stranded exonuclease. Recognizes the chi site generating a DNA molecule suitable for the initiation of homologous recombination. The AddB subunit has 5' -&gt; 3' nuclease activity but not helicase activity. This is ATP-dependent helicase/deoxyribonuclease subunit B from Caldanaerobacter subterraneus subsp. tengcongensis (strain DSM 15242 / JCM 11007 / NBRC 100824 / MB4) (Thermoanaerobacter tengcongensis).